Reading from the N-terminus, the 241-residue chain is NADPH-dependent FMN reductase ArsH (241 aa).

43–50 (SLRTVSYS) provides a ligand contact to FMN.

The protein belongs to the ArsH family. Homotetramer. It depends on FMN as a cofactor.

Has NADPH-dependent FMN reductase activity. No activity with NADH. May play a role in resistance to heavy metal toxicity. In Rhizobium meliloti (strain 1021) (Ensifer meliloti), this protein is NADPH-dependent FMN reductase ArsH.